The sequence spans 1071 residues: Carbamoyl phosphate synthase large chain (1071 aa).

The interval methionine 1 to glutamate 403 is carboxyphosphate synthetic domain. 12 residues coordinate ATP: arginine 129, arginine 169, glycine 175, glycine 176, glutamine 208, valine 210, glutamate 215, glycine 241, valine 242, histidine 243, glutamine 285, and glutamate 299. The 196-residue stretch at lysine 133–valine 328 folds into the ATP-grasp 1 domain. Glutamine 285, glutamate 299, and asparagine 301 together coordinate Mg(2+). Residues glutamine 285, glutamate 299, and asparagine 301 each contribute to the Mn(2+) site. The tract at residues threonine 404–serine 548 is oligomerization domain. The tract at residues arginine 549 to glycine 930 is carbamoyl phosphate synthetic domain. The 192-residue stretch at glutamine 673–alanine 864 folds into the ATP-grasp 2 domain. Arginine 709, phenylalanine 748, leucine 750, glutamate 755, glycine 780, isoleucine 781, histidine 782, serine 783, glutamine 823, and glutamate 835 together coordinate ATP. Mg(2+) is bound by residues glutamine 823, glutamate 835, and asparagine 837. Mn(2+)-binding residues include glutamine 823, glutamate 835, and asparagine 837. The region spanning glutamate 931–asparagine 1071 is the MGS-like domain. Positions glutamate 931–asparagine 1071 are allosteric domain.

It belongs to the CarB family. As to quaternary structure, composed of two chains; the small (or glutamine) chain promotes the hydrolysis of glutamine to ammonia, which is used by the large (or ammonia) chain to synthesize carbamoyl phosphate. Tetramer of heterodimers (alpha,beta)4. It depends on Mg(2+) as a cofactor. Requires Mn(2+) as cofactor.

It carries out the reaction hydrogencarbonate + L-glutamine + 2 ATP + H2O = carbamoyl phosphate + L-glutamate + 2 ADP + phosphate + 2 H(+). The catalysed reaction is hydrogencarbonate + NH4(+) + 2 ATP = carbamoyl phosphate + 2 ADP + phosphate + 2 H(+). It participates in amino-acid biosynthesis; L-arginine biosynthesis; carbamoyl phosphate from bicarbonate: step 1/1. It functions in the pathway pyrimidine metabolism; UMP biosynthesis via de novo pathway; (S)-dihydroorotate from bicarbonate: step 1/3. In terms of biological role, large subunit of the glutamine-dependent carbamoyl phosphate synthetase (CPSase). CPSase catalyzes the formation of carbamoyl phosphate from the ammonia moiety of glutamine, carbonate, and phosphate donated by ATP, constituting the first step of 2 biosynthetic pathways, one leading to arginine and/or urea and the other to pyrimidine nucleotides. The large subunit (synthetase) binds the substrates ammonia (free or transferred from glutamine from the small subunit), hydrogencarbonate and ATP and carries out an ATP-coupled ligase reaction, activating hydrogencarbonate by forming carboxy phosphate which reacts with ammonia to form carbamoyl phosphate. The protein is Carbamoyl phosphate synthase large chain of Neisseria meningitidis serogroup B (strain ATCC BAA-335 / MC58).